A 177-amino-acid polypeptide reads, in one-letter code: MESCPSVKNILLLDSEGKRVAVKYYTDDWPTLSAKLAFEKSVFVKTQKATAGAEAEIVMFDGHIVVYKFIQDLHFFVTGGEEENELILASVLQGFTDAVDIILRNNVDKRTALENLDLILLCLDEIVDGGIVLETEGSVIAEKVSAHGIEGATSLAEQTIVQALTTAREHLTKSLLM.

It belongs to the adaptor complexes small subunit family. In terms of assembly, oligomeric complex that consists of at least the alpha, beta, beta', gamma, delta, epsilon and zeta subunits.

Its subcellular location is the cytoplasm. It localises to the golgi apparatus membrane. It is found in the cytoplasmic vesicle. The protein resides in the COPI-coated vesicle membrane. Its function is as follows. The coatomer is a cytosolic protein complex that binds to dilysine motifs and reversibly associates with Golgi non-clathrin-coated vesicles, which further mediate biosynthetic protein transport from the ER, via the Golgi up to the trans Golgi network. Coatomer complex is required for budding from Golgi membranes, and is essential for the retrograde Golgi-to-ER transport of dilysine-tagged proteins. The zeta subunit may be involved in regulating the coat assembly and, hence, the rate of biosynthetic protein transport due to its association-dissociation properties with the coatomer complex. This chain is Coatomer subunit zeta-1 (COPZ1), found in Oryza sativa subsp. japonica (Rice).